The primary structure comprises 297 residues: Protoheme IX farnesyltransferase (297 aa).

Helical transmembrane passes span 26–46, 48–68, 96–116, 120–140, 147–167, 174–194, 218–238, 243–263, and 276–296; these read VTQL…PGMV, YPVL…AFAV, FHII…LWNF, LTMW…TWLL, NIVI…AAVT, AWLL…ALAL, LLNI…PYIY, IIYL…VIAL, and FRFS…DHYF.

Belongs to the UbiA prenyltransferase family. Protoheme IX farnesyltransferase subfamily.

The protein resides in the cell membrane. The catalysed reaction is heme b + (2E,6E)-farnesyl diphosphate + H2O = Fe(II)-heme o + diphosphate. It participates in porphyrin-containing compound metabolism; heme O biosynthesis; heme O from protoheme: step 1/1. Its function is as follows. Converts heme B (protoheme IX) to heme O by substitution of the vinyl group on carbon 2 of heme B porphyrin ring with a hydroxyethyl farnesyl side group. The sequence is that of Protoheme IX farnesyltransferase from Polynucleobacter asymbioticus (strain DSM 18221 / CIP 109841 / QLW-P1DMWA-1) (Polynucleobacter necessarius subsp. asymbioticus).